The following is a 578-amino-acid chain: Arginine--tRNA ligase (578 aa).

Positions 127-137 match the 'HIGH' region motif; sequence PNLAKEMHVGH.

The protein belongs to the class-I aminoacyl-tRNA synthetase family. In terms of assembly, monomer.

It localises to the cytoplasm. It catalyses the reaction tRNA(Arg) + L-arginine + ATP = L-arginyl-tRNA(Arg) + AMP + diphosphate. The sequence is that of Arginine--tRNA ligase from Pseudomonas fluorescens (strain ATCC BAA-477 / NRRL B-23932 / Pf-5).